A 610-amino-acid chain; its full sequence is Putative protein tag-250 (610 aa).

Tudor domains are found at residues 149 to 260 (VALK…LLPP) and 386 to 506 (MPMS…KIGG).

The chain is Putative protein tag-250 (tag-250) from Caenorhabditis elegans.